The primary structure comprises 340 residues: Protein-glutamate methylesterase/protein-glutamine glutaminase 1 (340 aa).

A Response regulatory domain is found at 5–122 (KLFIVDDSAL…KVVSELKEKI (118 aa)). Asp-56 carries the post-translational modification 4-aspartylphosphate. Residues 148 to 340 (GKNGRQLVVI…AIAEEIAANI (193 aa)) form the CheB-type methylesterase domain. Residues Ser-160, His-187, and Asp-285 contribute to the active site.

It belongs to the CheB family. In terms of processing, phosphorylated by CheA. Phosphorylation of the N-terminal regulatory domain activates the methylesterase activity.

Its subcellular location is the cytoplasm. It catalyses the reaction [protein]-L-glutamate 5-O-methyl ester + H2O = L-glutamyl-[protein] + methanol + H(+). It carries out the reaction L-glutaminyl-[protein] + H2O = L-glutamyl-[protein] + NH4(+). Involved in chemotaxis. Part of a chemotaxis signal transduction system that modulates chemotaxis in response to various stimuli. Catalyzes the demethylation of specific methylglutamate residues introduced into the chemoreceptors (methyl-accepting chemotaxis proteins or MCP) by CheR. Also mediates the irreversible deamidation of specific glutamine residues to glutamic acid. In Carboxydothermus hydrogenoformans (strain ATCC BAA-161 / DSM 6008 / Z-2901), this protein is Protein-glutamate methylesterase/protein-glutamine glutaminase 1.